The primary structure comprises 425 residues: Glucose-1-phosphate adenylyltransferase (425 aa).

Residues tyrosine 109, glycine 175, 190–191, and serine 208 each bind alpha-D-glucose 1-phosphate; that span reads EK.

The protein belongs to the bacterial/plant glucose-1-phosphate adenylyltransferase family. As to quaternary structure, homotetramer.

It catalyses the reaction alpha-D-glucose 1-phosphate + ATP + H(+) = ADP-alpha-D-glucose + diphosphate. The protein operates within glycan biosynthesis; glycogen biosynthesis. Its function is as follows. Involved in the biosynthesis of ADP-glucose, a building block required for the elongation reactions to produce glycogen. Catalyzes the reaction between ATP and alpha-D-glucose 1-phosphate (G1P) to produce pyrophosphate and ADP-Glc. The protein is Glucose-1-phosphate adenylyltransferase of Saccharophagus degradans (strain 2-40 / ATCC 43961 / DSM 17024).